A 159-amino-acid polypeptide reads, in one-letter code: Large ribosomal subunit protein uL23m (159 aa).

Belongs to the universal ribosomal protein uL23 family. Component of the mitochondrial ribosome large subunit (39S) which comprises a 16S rRNA and about 50 distinct proteins.

The protein localises to the mitochondrion. In Caenorhabditis elegans, this protein is Large ribosomal subunit protein uL23m (mrpl-23).